The primary structure comprises 155 residues: 3-dehydroquinate dehydratase (155 aa).

The active-site Proton acceptor is Y32. 3 residues coordinate substrate: N84, H90, and D97. The active-site Proton donor is the H110. Substrate is bound by residues 111-112 (LS) and R121.

It belongs to the type-II 3-dehydroquinase family. As to quaternary structure, homododecamer.

It carries out the reaction 3-dehydroquinate = 3-dehydroshikimate + H2O. The protein operates within metabolic intermediate biosynthesis; chorismate biosynthesis; chorismate from D-erythrose 4-phosphate and phosphoenolpyruvate: step 3/7. Catalyzes a trans-dehydration via an enolate intermediate. This Ralstonia pickettii (strain 12J) protein is 3-dehydroquinate dehydratase.